The following is a 770-amino-acid chain: Proprotein convertase subtilisin/kexin type 7 (770 aa).

A signal peptide spans 1 to 36 (MPKGRQKVPHLDAHLGLPICLWLELAIFFLVPQVMG). A propeptide spanning residues 37–140 (LSEAGGLDIL…EQTLLKRAKR (104 aa)) is cleaved from the precursor. Residues 141-666 (SIHFNDPKYP…YTITPNTLKT (526 aa)) are Extracellular-facing. The region spanning 152 to 472 (QWHLNNRRSP…FGLLNAWRLV (321 aa)) is the Peptidase S8 domain. N-linked (GlcNAc...) asparagine glycosylation is found at Asn-166 and Asn-174. Asp-186 serves as the catalytic Charge relay system. Positions 195–228 (DIAPNYSPEGSYDLNSNDPDPMPHPDEENGNHHG) are disordered. Over residues 215–225 (PMPHPDEENGN) the composition is skewed to basic and acidic residues. His-227 acts as the Charge relay system in catalysis. Asn-240 is a glycosylation site (N-linked (GlcNAc...) asparagine). Ser-405 functions as the Charge relay system in the catalytic mechanism. In terms of domain architecture, P/Homo B spans 480-617 (SVPYLASYVS…QLTLYGSMWS (138 aa)). A glycan (N-linked (GlcNAc...) asparagine) is linked at Asn-510. A helical transmembrane segment spans residues 667–687 (LVLVGCFSVFWTIYYMLEVCL). The Cytoplasmic portion of the chain corresponds to 688–770 (SQRNKASTHG…LLQGKSGQIC (83 aa)).

It belongs to the peptidase S8 family. Ca(2+) is required as a cofactor. Widely expressed. Expressed in brain, lung, muscle, heart, liver, kidney, spleen and thymus.

It localises to the golgi apparatus. Its subcellular location is the trans-Golgi network membrane. Its activity is regulated as follows. Inhibited by zinc and copper. Its function is as follows. Serine endoprotease that processes various proproteins by cleavage at paired basic amino acids, recognizing the RXXX[KR]R consensus motif. Likely functions in the constitutive secretory pathway. This chain is Proprotein convertase subtilisin/kexin type 7 (Pcsk7), found in Mus musculus (Mouse).